Consider the following 384-residue polypeptide: Putative exopolyphosphatase (384 aa).

Positions 40, 42, 116, 138, and 200 each coordinate Mn(2+).

This sequence belongs to the PPase class C family. The cofactor is Mn(2+).

It catalyses the reaction [phosphate](n) + H2O = [phosphate](n-1) + phosphate + H(+). Degradation of inorganic polyphosphates. The chain is Putative exopolyphosphatase from Schizosaccharomyces pombe (strain 972 / ATCC 24843) (Fission yeast).